The chain runs to 90 residues: Putative regulatory protein Dred_1699 (90 aa).

The protein belongs to the RemA family.

In Desulforamulus reducens (strain ATCC BAA-1160 / DSM 100696 / MI-1) (Desulfotomaculum reducens), this protein is Putative regulatory protein Dred_1699.